Reading from the N-terminus, the 53-residue chain is Large ribosomal subunit protein eL40 (53 aa).

This sequence belongs to the eukaryotic ribosomal protein eL40 family.

This Staphylothermus marinus (strain ATCC 43588 / DSM 3639 / JCM 9404 / F1) protein is Large ribosomal subunit protein eL40.